Here is a 120-residue protein sequence, read N- to C-terminus: NAD(P)H-quinone oxidoreductase subunit 3, chloroplastic (120 aa).

Transmembrane regions (helical) follow at residues 7–27, 64–84, and 89–109; these read YDYFFVFLLIISFFSILIFSL, MFALVFVIFDVETVFLYPWAM, and FGISSFIEALIFILILIIGLV.

Belongs to the complex I subunit 3 family. In terms of assembly, NDH is composed of at least 16 different subunits, 5 of which are encoded in the nucleus.

It localises to the plastid. The protein localises to the chloroplast thylakoid membrane. It carries out the reaction a plastoquinone + NADH + (n+1) H(+)(in) = a plastoquinol + NAD(+) + n H(+)(out). It catalyses the reaction a plastoquinone + NADPH + (n+1) H(+)(in) = a plastoquinol + NADP(+) + n H(+)(out). Functionally, NDH shuttles electrons from NAD(P)H:plastoquinone, via FMN and iron-sulfur (Fe-S) centers, to quinones in the photosynthetic chain and possibly in a chloroplast respiratory chain. The immediate electron acceptor for the enzyme in this species is believed to be plastoquinone. Couples the redox reaction to proton translocation, and thus conserves the redox energy in a proton gradient. This is NAD(P)H-quinone oxidoreductase subunit 3, chloroplastic from Marchantia polymorpha (Common liverwort).